The following is a 96-amino-acid chain: MQIDNTVLEKLEKLSHLRIDDSKKEEVMGQLSEILGYIDNLNELNTDHLDAAFSTLKGGTPLREDIPRTENNIARDILSRAPESKDDFFIVPAIIE.

The protein belongs to the GatC family. Heterotrimer of A, B and C subunits.

The catalysed reaction is L-glutamyl-tRNA(Gln) + L-glutamine + ATP + H2O = L-glutaminyl-tRNA(Gln) + L-glutamate + ADP + phosphate + H(+). The enzyme catalyses L-aspartyl-tRNA(Asn) + L-glutamine + ATP + H2O = L-asparaginyl-tRNA(Asn) + L-glutamate + ADP + phosphate + 2 H(+). Functionally, allows the formation of correctly charged Asn-tRNA(Asn) or Gln-tRNA(Gln) through the transamidation of misacylated Asp-tRNA(Asn) or Glu-tRNA(Gln) in organisms which lack either or both of asparaginyl-tRNA or glutaminyl-tRNA synthetases. The reaction takes place in the presence of glutamine and ATP through an activated phospho-Asp-tRNA(Asn) or phospho-Glu-tRNA(Gln). This is Aspartyl/glutamyl-tRNA(Asn/Gln) amidotransferase subunit C from Sulfurovum sp. (strain NBC37-1).